A 393-amino-acid chain; its full sequence is Acyltransferase ato1 (393 aa).

This sequence belongs to the lysine N-acyltransferase mbtK family.

It functions in the pathway siderophore biosynthesis; ferrichrome biosynthesis. In terms of biological role, L-ornithine N(5)-monooxygenase; part of the siderophore biosynthetic pathway. Omphalotus olearius produces ferrichrome A, but no other siderophore has been detected. Ferrichrome A consists of a hexapeptide ring made up of one glycine, two serine, and three N(5)-hydroxyornithine amino acid residues, the latter acylated by trans-(alpha-methyl)-glutaconic acid residues. The biosynthesis of ferrichrome A depends on the hydroxylation of ornithine to N(5)-hydroxyornithine, catalyzed by the monooxygenase omo1. The second step, the acylation of N(5)-hydroxy-L-ornithine is probably catalyzed by the N-acyltransferase ato1. Finally, assembly of ferrichrome A is catalyzed by the nonribosomal peptide synthase (NRPS) fso1. This Omphalotus olearius (Jack o'lantern) protein is Acyltransferase ato1.